The chain runs to 95 residues: Integration host factor subunit beta (95 aa).

It belongs to the bacterial histone-like protein family. Heterodimer of an alpha and a beta chain.

Its function is as follows. This protein is one of the two subunits of integration host factor, a specific DNA-binding protein that functions in genetic recombination as well as in transcriptional and translational control. The protein is Integration host factor subunit beta of Klebsiella pneumoniae subsp. pneumoniae (strain ATCC 700721 / MGH 78578).